A 329-amino-acid chain; its full sequence is Isopenicillin N synthase (329 aa).

Arg-87, Tyr-91, Ser-183, and Tyr-189 together coordinate isopenicillin N. N-[(5S)-5-amino-5-carboxypentanoyl]-L-cysteinyl-D-valine contacts are provided by Arg-87, Tyr-91, Ser-183, Tyr-189, His-212, and Asp-214. Residues Thr-180 to Ala-286 form the Fe2OG dioxygenase domain. Residues His-212, Asp-214, and His-268 each coordinate Fe(2+). Arg-277 contributes to the 2-oxoglutarate binding site. Ser-279 contributes to the isopenicillin N binding site. Residue Ser-279 participates in N-[(5S)-5-amino-5-carboxypentanoyl]-L-cysteinyl-D-valine binding.

Belongs to the iron/ascorbate-dependent oxidoreductase family. Requires Fe cation as cofactor. L-ascorbate is required as a cofactor.

The enzyme catalyses N-[(5S)-5-amino-5-carboxypentanoyl]-L-cysteinyl-D-valine + O2 = isopenicillin N + 2 H2O. It participates in antibiotic biosynthesis; penicillin G biosynthesis; penicillin G from L-alpha-aminoadipate and L-cysteine and L-valine: step 2/3. Removes, in the presence of oxygen, 4 hydrogen atoms from delta-L-(alpha-aminoadipyl)-L-cysteinyl-D-valine (ACV) to form the azetidinone and thiazolidine rings of isopenicillin. This is Isopenicillin N synthase (pcbC) from Streptomyces jumonjinensis.